Here is a 299-residue protein sequence, read N- to C-terminus: Elongation factor Ts, mitochondrial (299 aa).

The transit peptide at 1-18 directs the protein to the mitochondrion; it reads MLFQRRLHFHQFFGKTRV.

The protein belongs to the EF-Ts family.

The protein resides in the mitochondrion. Functionally, associates with the EF-Tu.GDP complex and induces the exchange of GDP to GTP. It remains bound to the aminoacyl-tRNA.EF-Tu.GTP complex up to the GTP hydrolysis stage on the ribosome. The protein is Elongation factor Ts, mitochondrial (tsf1) of Schizosaccharomyces pombe (strain 972 / ATCC 24843) (Fission yeast).